We begin with the raw amino-acid sequence, 327 residues long: Ribosomal RNA small subunit methyltransferase H (327 aa).

Residues 36–38 (GGH), aspartate 61, phenylalanine 88, aspartate 114, and glutamine 121 each bind S-adenosyl-L-methionine.

It belongs to the methyltransferase superfamily. RsmH family.

It is found in the cytoplasm. It catalyses the reaction cytidine(1402) in 16S rRNA + S-adenosyl-L-methionine = N(4)-methylcytidine(1402) in 16S rRNA + S-adenosyl-L-homocysteine + H(+). In terms of biological role, specifically methylates the N4 position of cytidine in position 1402 (C1402) of 16S rRNA. This chain is Ribosomal RNA small subunit methyltransferase H, found in Chlorobium luteolum (strain DSM 273 / BCRC 81028 / 2530) (Pelodictyon luteolum).